Reading from the N-terminus, the 135-residue chain is MRVLGLDVGDRTIGVAVSDPLGFTAQGITTVHRKSVKEDIDELKKICKEYAVELIISGLPKNMNGTVGEQGEKVIEFCELLKSELKMPIKMWDERLTTVAAHRAMLEANLSRAKRKKIVDKMAATYILQGYLDSI.

The protein belongs to the YqgF nuclease family.

Its subcellular location is the cytoplasm. In terms of biological role, could be a nuclease involved in processing of the 5'-end of pre-16S rRNA. The sequence is that of Putative pre-16S rRNA nuclease from Clostridium novyi (strain NT).